We begin with the raw amino-acid sequence, 294 residues long: Universal stress protein MSMEG_3950/MSMEI_3859 (294 aa).

Glycine 13 serves as a coordination point for ATP. Residue lysine 109 forms an Isoglutamyl lysine isopeptide (Lys-Gln) (interchain with Q-Cter in protein Pup) linkage. Residues 117–123, 131–132, glycine 164, aspartate 197, 261–267, and 275–277 contribute to the ATP site; these read GNRGMGA, ST, GSHGRGG, and SVS.

The protein belongs to the universal stress protein A family.

The sequence is that of Universal stress protein MSMEG_3950/MSMEI_3859 from Mycolicibacterium smegmatis (strain ATCC 700084 / mc(2)155) (Mycobacterium smegmatis).